A 615-amino-acid chain; its full sequence is MPIQVLPPQLANQIAAGEVVERPASVVKELVENSLDAGATRIDIDIERGGAKLIRIRDNGCGIKKDELALALARHATSKIASLDDLEAIISLGFRGEALASISSVSRLTLTSRTAEQQEAWQAYAEGRDMNVTVKPAAHPVGTTLEVLDLFYNTPARRKFLRTEKTEFNHIDEIIRRIALARFDVTINLSHNGKIVRQYRAVPEGGQKERRLGAICGTAFLEQALAIEWQHGDLTLRGWVADPNHTTPALAEIQYCYVNGRMMRDRLINHAIRQACEDKLGADQQPAFVLYLEIDPHQVDVNVHPAKHEVRFHQSRLVHDFIYQGVLSVLQQQLETPLPLDDEPQPAPRSIPENRVAAGRNHFAEPAAREPVAPRYTPAPASGSRPAAPWPNAQPGYQKQQGEVYRQLLQTPAPMQKLKAPEPQEPALAANSQSFGRVLTIVHSDCALLERDGNISLLALPVAERWLRQVQLTPGEAPVCAQPLLIPLRLKVSGEEKSALEKAQSALAELGIDFQSDAQHVTIRAVPLPLRQQNLQILIPELIGYLAKQSVFEPGNIAQWIARNLMSEHAQWSMAQAITLLADVERLCPQLVKTPPGGLLQSVDLHPAIKALKDE.

The interval 363-397 is disordered; it reads FAEPAAREPVAPRYTPAPASGSRPAAPWPNAQPGY. Over residues 364 to 391 the composition is skewed to low complexity; it reads AEPAAREPVAPRYTPAPASGSRPAAPWP.

It belongs to the DNA mismatch repair MutL/HexB family.

In terms of biological role, this protein is involved in the repair of mismatches in DNA. It is required for dam-dependent methyl-directed DNA mismatch repair. May act as a 'molecular matchmaker', a protein that promotes the formation of a stable complex between two or more DNA-binding proteins in an ATP-dependent manner without itself being part of a final effector complex. The sequence is that of DNA mismatch repair protein MutL from Shigella boydii serotype 18 (strain CDC 3083-94 / BS512).